We begin with the raw amino-acid sequence, 597 residues long: MAGTVRTACLLVAMLLGLGCLGQAQPPPPPDATCHQVRSFFQRLQPGLKWVPETPVPGSDLQVCLPKGPTCCSRKMEEKYQLTARLNMEQLLQSASMELKFLIIQNAAVFQEAFEIVVRHAKNYTNAMFKNNYPSLTPQAFEFVGEFFTDVSLYILGSDINVDDMVNELFDSLFPVIYTQMMNPGLPESVLDINECLRGARRDLKVFGSFPKLIMTQVSKSLQVTRIFLQALNLGIEVINTTDHLKFSKDCGRMLTRMWYCSYCQGLMMVKPCGGYCNVVMQGCMAGVVEIDKYWREYILSLEELVNGMYRIYDMENVLLGLFSTIHDSIQYVQKNGGKLTTTIGKLCAHSQQRQYRSAYYPEDLFIDKKVLKVARVEHEETLSSRRRELIQKLKSFISFYSALPGYICSHSPVAENDTLCWNGQELVERYSQKAARNGMKNQFNLHELKMKGPEPVVSQIIDKLKHINQLLRTMSVPKGKVVDKSLDEEGLESGDCGDDEDECIGSSGDGMMKVKNQLRFLAELAYDLDVDDAPGNKQHGNQKDNEITTSHSVGNMPSPLKILISVAIYVACFFSWCTDLPCPCLCCPAAPCGPPT.

The N-terminal stretch at 1–24 (MAGTVRTACLLVAMLLGLGCLGQA) is a signal peptide. The residue at position 25 (glutamine 25) is a Pyrrolidone carboxylic acid. 7 disulfides stabilise this stretch: cysteine 34-cysteine 71, cysteine 64-cysteine 261, cysteine 72-cysteine 264, cysteine 196-cysteine 348, cysteine 251-cysteine 284, cysteine 273-cysteine 421, and cysteine 277-cysteine 409. N-linked (GlcNAc...) asparagine glycosylation is found at asparagine 123 and asparagine 240. Residue serine 351 is modified to Phosphoserine. N-linked (GlcNAc...) asparagine glycosylation is present at asparagine 417. 2 O-linked (Xyl...) (glycosaminoglycan) serine glycosylation sites follow: serine 494 and serine 508. A disordered region spans residues 533–553 (DAPGNKQHGNQKDNEITTSHS).

The protein belongs to the glypican family. As to quaternary structure, heterodimer; disulfide-linked. Cleavage by a furin-like convertase results in production of alpha and beta chains which form a disulfide-linked heterodimer. Interacts with DPP4. Interacts with FGF2. Interacts with WNT5A. Also interacts with WNT3A and WNT7B. Interacts with hedgehog protein SHH; the heparan sulfate chains are not required for the interaction. Also interacts with hedgehog protein IHH. Interacts with CD81. Interacts with Wnt receptors FZD4, FZD7 and FZD8; the heparan sulfate chains are required for the interaction. O-glycosylated; contains heparan sulfate and/or chondroitin sulfate. In terms of processing, cleaved intracellularly by a furin-like convertase to generate 2 subunits, alpha and beta, which remain associated through disulfide bonds and are associated with the cell surface via the GPI-anchor. This processing is essential for its role in inhibition of hedgehog signaling. A second proteolytic event may result in cleavage of the protein on the cell surface, separating it from the GPI-anchor and leading to its shedding from the cell surface.

The protein localises to the cell membrane. Cell surface proteoglycan. Negatively regulates the hedgehog signaling pathway when attached via the GPI-anchor to the cell surface by competing with the hedgehog receptor PTC1 for binding to hedgehog proteins. Binding to the hedgehog protein SHH triggers internalization of the complex by endocytosis and its subsequent lysosomal degradation. Positively regulates the canonical Wnt signaling pathway by binding to the Wnt receptor Frizzled and stimulating the binding of the Frizzled receptor to Wnt ligands. Positively regulates the non-canonical Wnt signaling pathway. Binds to CD81 which decreases the availability of free CD81 for binding to the transcriptional repressor HHEX, resulting in nuclear translocation of HHEX and transcriptional repression. Inhibits the dipeptidyl peptidase activity of DPP4. Plays a role in limb patterning and skeletal development by controlling the cellular response to BMP4. Modulates the effects of growth factors BMP2, BMP7 and FGF7 on renal branching morphogenesis. Required for coronary vascular development. Plays a role in regulating cell movements during gastrulation. In Rattus norvegicus (Rat), this protein is Glypican-3 (Gpc3).